Reading from the N-terminus, the 191-residue chain is Uridylate kinase (191 aa).

12 to 17 is an ATP binding site; the sequence is GAGKGT. Residues 33-63 form an NMP region; sequence SAGDCLREEQNRPGSKYGNLIKEYIKDGKIV. A ribonucleoside 5'-phosphate is bound by residues Arg-39, 61–63, 91–94, and Gln-98; these read KIV and GFPR. Residues 128–138 are LID; it reads HRGKTSGRSDD. Arg-129 is a binding site for ATP. Residues Arg-135 and Arg-146 each contribute to the a ribonucleoside 5'-phosphate site. An ATP-binding site is contributed by Gln-174.

Belongs to the adenylate kinase family. UMP-CMP kinase subfamily. In terms of assembly, monomer. It depends on Mg(2+) as a cofactor.

The protein localises to the cytoplasm. Its subcellular location is the nucleus. The catalysed reaction is UMP + ATP = UDP + ADP. In terms of biological role, catalyzes the phosphorylation of pyrimidine nucleoside monophosphates at the expense of ATP. Plays an important role in de novo pyrimidine nucleotide biosynthesis. Has preference for UMP and dUMP as phosphate acceptors, but can also use CMP, dCMP and AMP. The polypeptide is Uridylate kinase (Schizosaccharomyces pombe (strain 972 / ATCC 24843) (Fission yeast)).